The primary structure comprises 502 residues: MSDLLDDPTPGQNAPEFSVSEISGEVKRTLEGTFGRIRVRGEVGRVFKARSGHLYYDIKDDRSVLACTTWKGQISGLSVVPEEGLEVVVTGRLTAFGGQSKYNMNVDEVAVAGQGALMALLEKRKAQLAAEGLFAPERKKPLPYLPGIIGVITSPSGAVIRDILHRLRDRFPRKVLVWPVAVQGSNSAPEVARAIDGFNALTPGGALPRPDLIIVARGGGSIEDLWGFNEEIVARATAASDIPLISAVGHETDTTLIDYVSDLRAPTPTAAAEHAVPVRLELLGWVENQGARMANAASRAVQLRRQRLGDMARALPRPDTLLETPRQRLDRVSDRLPNALISGVQRRKLTLSDRAASLRPATLRGLVSSRQDKLKNLSSRLTLRPITQDLGRKRDALDRITKRLNTAQSSRIDRQIDRLSATARQLDILSYKATLRRGYAVVRDGAALVTSTEGARKAAELSIEFADGTFDVASAPSTTKKSAPKPAAPKAPKTPGEQGSLF.

Low complexity predominate over residues 474–495 (SAPSTTKKSAPKPAAPKAPKTP). The disordered stretch occupies residues 474–502 (SAPSTTKKSAPKPAAPKAPKTPGEQGSLF).

This sequence belongs to the XseA family. As to quaternary structure, heterooligomer composed of large and small subunits.

It localises to the cytoplasm. The enzyme catalyses Exonucleolytic cleavage in either 5'- to 3'- or 3'- to 5'-direction to yield nucleoside 5'-phosphates.. In terms of biological role, bidirectionally degrades single-stranded DNA into large acid-insoluble oligonucleotides, which are then degraded further into small acid-soluble oligonucleotides. The sequence is that of Exodeoxyribonuclease 7 large subunit from Ruegeria sp. (strain TM1040) (Silicibacter sp.).